The sequence spans 176 residues: Disulfide bond formation protein B (176 aa).

Over 1-14 the chain is Cytoplasmic; that stretch reads MLRFLNQCSRGRGA. The helical transmembrane segment at 15-31 threads the bilayer; sequence WLLMAFTALALEMVALW. Over 32-49 the chain is Periplasmic; the sequence is FQHVMLLKPCVLCIYERC. Cysteine 41 and cysteine 44 are disulfide-bonded. A helical transmembrane segment spans residues 50–65; sequence ALFGVMGAGLVGAIAP. The Cytoplasmic segment spans residues 66–71; that stretch reads KTPLRY. The helical transmembrane segment at 72 to 89 threads the bilayer; it reads VAMVIWIYSAWRGLQLAY. Residues 90 to 144 lie on the Periplasmic side of the membrane; sequence EHTMIQLHPSPFMTCDFMARFPDWLPLGKWLPQVFVASGDCAERQWSFLTLEMPQ. Cysteine 104 and cysteine 130 are oxidised to a cystine. The chain crosses the membrane as a helical span at residues 145 to 163; that stretch reads WLLGIFAAYLVVAIAVVIA. Topologically, residues 164 to 176 are cytoplasmic; the sequence is QAFKPKKRDLFGR.

This sequence belongs to the DsbB family.

It localises to the cell inner membrane. Its function is as follows. Required for disulfide bond formation in some periplasmic proteins. Acts by oxidizing the DsbA protein. This Salmonella paratyphi A (strain ATCC 9150 / SARB42) protein is Disulfide bond formation protein B.